A 248-amino-acid polypeptide reads, in one-letter code: Adenylate kinase isoenzyme 6 homolog HBR1 (248 aa).

Positions 19, 21, 22, 23, and 24 each coordinate ATP. Residues 49 to 72 form an NMPbind region; the sequence is NISEIAKERDCIESYDAKLDTSIV. Positions 124–134 are LID; the sequence is TRNYNDLKLQE. Arg125 provides a ligand contact to ATP. The interval 188–248 is disordered; the sequence is DGVSNELNKQ…EMEHTEDIAQ (61 aa). A compositionally biased stretch (acidic residues) spans 202 to 238; the sequence is DSSDEGDDNSDSDEYELEEDEQEEEEEREEYDEETNE. A compositionally biased stretch (basic and acidic residues) spans 239–248; that stretch reads EMEHTEDIAQ.

Belongs to the adenylate kinase family. AK6 subfamily. Interacts with small ribosomal subunit protein uS11. Not a structural component of 43S pre-ribosomes, but transiently interacts with them by binding to uS11.

Its subcellular location is the cytoplasm. It is found in the nucleus. The catalysed reaction is AMP + ATP = 2 ADP. The enzyme catalyses ATP + H2O = ADP + phosphate + H(+). Broad-specificity nucleoside monophosphate (NMP) kinase that catalyzes the reversible transfer of the terminal phosphate group between nucleoside triphosphates and monophosphates. Also has ATPase activity. Involved in the late cytoplasmic maturation steps of the 40S ribosomal particles, specifically 18S rRNA maturation. While NMP activity is not required for ribosome maturation, ATPase activity is. Associates transiently with small ribosomal subunit protein uS11. ATP hydrolysis breaks the interaction with uS11. May temporarily remove uS11 from the ribosome to enable a conformational change of the ribosomal RNA that is needed for the final maturation step of the small ribosomal subunit. Its NMP activity may have a role in nuclear energy homeostasis. Induces transcription of mating-type proteins ALPHA1 and ALPHA2 and moderately represses transcription of mating-type protein A1 in response to hemoglobin and growth signals. Involved in the induction of a high affinity fibronectin receptor by sub-inhibitory dosages of caspofungin. The polypeptide is Adenylate kinase isoenzyme 6 homolog HBR1 (HBR1) (Candida albicans (strain SC5314 / ATCC MYA-2876) (Yeast)).